The following is a 1103-amino-acid chain: Ubiquitin carboxyl-terminal hydrolase 7 (1103 aa).

Residues 1–11 are compositionally biased toward low complexity; that stretch reads MNHQQQQQQQQ. Disordered regions lie at residues 1-41 and 46-65; these read MNHQ…TQNP and NVTL…DDTS. The tract at residues 1–209 is interaction with TSPYL5; it reads MNHQQQQQQQ…APHGVAWDSK (209 aa). S19 is subject to Phosphoserine. The segment covering 20–32 has biased composition (acidic residues); the sequence is EPEDMEMEAGDTD. S50 and S54 each carry phosphoserine. An interaction with p53/TP53 and MDM2 region spans residues 54–209; it reads SNAEEDMEDD…APHGVAWDSK (156 aa). In terms of domain architecture, MATH spans 69 to 196; it reads EATFQFTVER…DDKVTFEVFV (128 aa). Residues 71–206 are necessary for nuclear localization; that stretch reads TFQFTVERFS…QADAPHGVAW (136 aa). The region spanning 215–522 is the USP domain; the sequence is VGLKNQGATC…NAYMLVYIRE (308 aa). C224 serves as the catalytic Nucleophile. The Proton acceptor role is filled by H465. The residue at position 870 (K870) is an N6-acetyllysine; alternate. Residue K870 forms a Glycyl lysine isopeptide (Lys-Gly) (interchain with G-Cter in SUMO2); alternate linkage. Residue K870 forms a Glycyl lysine isopeptide (Lys-Gly) (interchain with G-Cter in ubiquitin); alternate linkage. Residue K883 forms a Glycyl lysine isopeptide (Lys-Gly) (interchain with G-Cter in SUMO2) linkage. Phosphoserine is present on S964. N6-acetyllysine is present on residues K1085 and K1097.

The protein belongs to the peptidase C19 family. In terms of assembly, monomer. Homodimer. Part of a complex with DAXX, MDM2, RASSF1 and USP7. Part of a complex with DAXX, MDM2 and USP7. Interacts with MDM2; the interaction is independent of p53/TP53. Interacts with DAXX; the interaction is direct and independent of MDM2 and p53/TP53. Component of a complex composed of KMT2E, OGT and USP7; the complex stabilizes KMT2E, preventing KMT2E ubiquitination and proteasomal-mediated degradation. Interacts (via MATH domain) with KMT2E. Interacts with OGT. Interacts with FOXO4; the interaction is enhanced in presence of hydrogen peroxide and occurs independently of p53/TP53. Interacts with p53/TP53; the interaction is enhanced in response to DNA damage; the interaction is impaired by TSPYL5. Interacts with PTEN; the interaction is direct. Interacts with ATXN1 and the strength of interaction is influenced by the length of the poly-Gln region in ATXN1. A weaker interaction seen with mutants having longer poly-Gln regions. Interacts with KIAA1530/UVSSA. Interacts with MEX3C and antagonizes its ability to degrade mRNA. Interacts with DNMT1 and UHRF1. Interacts with FOXP3. Interacts (via MATH domain) with RNF220. Associated component of the Polycomb group (PcG) multiprotein PRC1-like complex. Interacts with EPOP. Interacts with OTUD4 and USP9X; the interaction is direct. Interacts with CRY2. Interacts with REST. Interacts with ERCC6. Part of a complex consisting of USP7, MAGEL2 and TRIM27; directly interacts with MAGEL2; directly interacts with TRIM27. Post-translationally, polyneddylated. Not sumoylated. In terms of processing, polyubiquitinated. Ubiquitinated at Lys-870. As to expression, widely expressed. High expression is detected in brain, bone marrow, thymus and testis.

It localises to the nucleus. The protein localises to the cytoplasm. Its subcellular location is the PML body. It is found in the chromosome. The catalysed reaction is Thiol-dependent hydrolysis of ester, thioester, amide, peptide and isopeptide bonds formed by the C-terminal Gly of ubiquitin (a 76-residue protein attached to proteins as an intracellular targeting signal).. In terms of biological role, hydrolase that deubiquitinates target proteins such as ARMC5, FOXO4, DEPTOR, KAT5, p53/TP53, MDM2, ERCC6, DNMT1, UHRF1, PTEN, KMT2E/MLL5 and DAXX. Together with DAXX, prevents MDM2 self-ubiquitination and enhances the E3 ligase activity of MDM2 towards p53/TP53, thereby promoting p53/TP53 ubiquitination and proteasomal degradation. Deubiquitinates p53/TP53, preventing degradation of p53/TP53, and enhances p53/TP53-dependent transcription regulation, cell growth repression and apoptosis. Deubiquitinates p53/TP53 and MDM2 and strongly stabilizes p53/TP53 even in the presence of excess MDM2, and also induces p53/TP53-dependent cell growth repression and apoptosis. Deubiquitination of FOXO4 in presence of hydrogen peroxide is not dependent on p53/TP53 and inhibits FOXO4-induced transcriptional activity. In association with DAXX, is involved in the deubiquitination and translocation of PTEN from the nucleus to the cytoplasm, both processes that are counteracted by PML. Deubiquitinates KMT2E preventing KMT2E proteasomal-mediated degradation. Involved in cell proliferation during early embryonic development. Involved in transcription-coupled nucleotide excision repair (TC-NER) in response to UV damage: recruited to DNA damage sites following interaction with KIAA1530/UVSSA and promotes deubiquitination of ERCC6, preventing UV-induced degradation of ERCC6. Involved in maintenance of DNA methylation via its interaction with UHRF1 and DNMT1: acts by mediating deubiquitination of UHRF1 and DNMT1, preventing their degradation and promoting DNA methylation by DNMT1. Deubiquitinates alkylation repair enzyme ALKBH3. OTUD4 recruits USP7 and USP9X to stabilize ALKBH3, thereby promoting the repair of alkylated DNA lesions. Acts as a chromatin regulator via its association with the Polycomb group (PcG) multiprotein PRC1-like complex; may act by deubiquitinating components of the PRC1-like complex. Able to mediate deubiquitination of histone H2B; it is however unsure whether this activity takes place in vivo. Exhibits a preference towards 'Lys-48'-linked ubiquitin chains. Increases regulatory T-cells (Treg) suppressive capacity by deubiquitinating and stabilizing the transcription factor FOXP3 which is crucial for Treg cell function. Plays a role in the maintenance of the circadian clock periodicity via deubiquitination and stabilization of the CRY1 and CRY2 proteins. Deubiquitinates REST, thereby stabilizing REST and promoting the maintenance of neural progenitor cells. Deubiquitinates SIRT7, inhibiting SIRT7 histone deacetylase activity and regulating gluconeogenesis. Involved in the regulation of WASH-dependent actin polymerization at the surface of endosomes and the regulation of endosomal protein recycling. It maintains optimal WASH complex activity and precise F-actin levels via deubiquitination of TRIM27 and WASHC1. Mediates the deubiquitination of phosphorylated DEPTOR, promoting its stability and leading to decreased mTORC1 signaling. The chain is Ubiquitin carboxyl-terminal hydrolase 7 (Usp7) from Mus musculus (Mouse).